A 485-amino-acid polypeptide reads, in one-letter code: Glutamyl-tRNA(Gln) amidotransferase subunit A (485 aa).

Residues K82 and S157 each act as charge relay system in the active site. S181 serves as the catalytic Acyl-ester intermediate.

This sequence belongs to the amidase family. GatA subfamily. As to quaternary structure, heterotrimer of A, B and C subunits.

The enzyme catalyses L-glutamyl-tRNA(Gln) + L-glutamine + ATP + H2O = L-glutaminyl-tRNA(Gln) + L-glutamate + ADP + phosphate + H(+). Its function is as follows. Allows the formation of correctly charged Gln-tRNA(Gln) through the transamidation of misacylated Glu-tRNA(Gln) in organisms which lack glutaminyl-tRNA synthetase. The reaction takes place in the presence of glutamine and ATP through an activated gamma-phospho-Glu-tRNA(Gln). The protein is Glutamyl-tRNA(Gln) amidotransferase subunit A of Treponema denticola (strain ATCC 35405 / DSM 14222 / CIP 103919 / JCM 8153 / KCTC 15104).